The following is a 248-amino-acid chain: DNA repair protein RecO (248 aa).

The protein belongs to the RecO family.

Its function is as follows. Involved in DNA repair and RecF pathway recombination. This Streptomyces griseus subsp. griseus (strain JCM 4626 / CBS 651.72 / NBRC 13350 / KCC S-0626 / ISP 5235) protein is DNA repair protein RecO.